Reading from the N-terminus, the 446-residue chain is Probable carboxylesterase 16 (446 aa).

A disordered region spans residues 84–131 (PEPDSLRHKDNYNHQPRSDRRHSYGPNHNSPAPAERNESRRNSYGCNN). The span at 87–105 (DSLRHKDNYNHQPRSDRRH) shows a compositional bias: basic and acidic residues. Residues 158–160 (HGG) carry the Involved in the stabilization of the negatively charged intermediate by the formation of the oxyanion hole motif. Active-site residues include S274, D378, and H408.

It belongs to the 'GDXG' lipolytic enzyme family. As to expression, expressed in roots, leaves, stems, flowers and siliques.

The enzyme catalyses a carboxylic ester + H2O = an alcohol + a carboxylate + H(+). Functionally, carboxylesterase acting on esters with varying acyl chain length. The chain is Probable carboxylesterase 16 (CXE16) from Arabidopsis thaliana (Mouse-ear cress).